A 463-amino-acid chain; its full sequence is Argininosuccinate lyase (463 aa).

Belongs to the lyase 1 family. Argininosuccinate lyase subfamily.

It is found in the cytoplasm. The enzyme catalyses 2-(N(omega)-L-arginino)succinate = fumarate + L-arginine. The protein operates within amino-acid biosynthesis; L-arginine biosynthesis; L-arginine from L-ornithine and carbamoyl phosphate: step 3/3. The polypeptide is Argininosuccinate lyase (Staphylococcus epidermidis (strain ATCC 35984 / DSM 28319 / BCRC 17069 / CCUG 31568 / BM 3577 / RP62A)).